The following is a 149-amino-acid chain: Large ribosomal subunit protein bL9 (149 aa).

The protein belongs to the bacterial ribosomal protein bL9 family.

Functionally, binds to the 23S rRNA. In Clostridioides difficile (strain 630) (Peptoclostridium difficile), this protein is Large ribosomal subunit protein bL9.